The following is a 637-amino-acid chain: DEAD-box ATP-dependent RNA helicase 37 (637 aa).

2 disordered regions span residues 1-68 and 86-141; these read MRSS…QPSA and GPAS…EEAT. Low complexity-rich tracts occupy residues 10–28 and 46–68; these read ANAE…PVAN and GQAP…QPSA. The segment covering 104-116 has biased composition (gly residues); that stretch reads GGRGGGGGGGGGW. The Q motif signature appears at 174–202; that stretch reads NTFAEIDLGDALNENIRRCKYVKPTPVQR. One can recognise a Helicase ATP-binding domain in the interval 205–389; it reads IPISIAGRDL…SDFLADYIFL (185 aa). 218 to 225 is a binding site for ATP; it reads AQTGSGKT. The DEAD box signature appears at 333–336; it reads DEAD. One can recognise a Helicase C-terminal domain in the interval 416–567; sequence YLMDLLHAQK…EVPQWLERYS (152 aa). Positions 570–610 are disordered; the sequence is SSFGGGGGRNRRSGGARFGGRDFRRDNRGGGGGGYGGGGGG. The span at 588–597 shows a compositional bias: basic and acidic residues; it reads GGRDFRRDNR. The span at 598–610 shows a compositional bias: gly residues; the sequence is GGGGGGYGGGGGG.

This sequence belongs to the DEAD box helicase family. DDX3/DED1 subfamily.

It catalyses the reaction ATP + H2O = ADP + phosphate + H(+). The sequence is that of DEAD-box ATP-dependent RNA helicase 37 (PL10A) from Oryza sativa subsp. japonica (Rice).